We begin with the raw amino-acid sequence, 215 residues long: Large ribosomal subunit protein uL4 (215 aa).

The segment at 46 to 72 (TAKSKNRAEVSGGGRKPWAQKGGGRAR) is disordered. The segment covering 56–71 (SGGGRKPWAQKGGGRA) has biased composition (gly residues).

Belongs to the universal ribosomal protein uL4 family. In terms of assembly, part of the 50S ribosomal subunit.

In terms of biological role, one of the primary rRNA binding proteins, this protein initially binds near the 5'-end of the 23S rRNA. It is important during the early stages of 50S assembly. It makes multiple contacts with different domains of the 23S rRNA in the assembled 50S subunit and ribosome. Functionally, forms part of the polypeptide exit tunnel. The chain is Large ribosomal subunit protein uL4 from Helicobacter pylori (strain G27).